Consider the following 208-residue polypeptide: dITP/XTP pyrophosphatase (208 aa).

11–16 is a substrate binding site; the sequence is SRNWKK. Residue Asp76 is the Proton acceptor of the active site. Asp76 provides a ligand contact to Mg(2+). Residues Ser77, 158-161, Lys184, and 189-190 contribute to the substrate site; these read FGYD and HR.

It belongs to the HAM1 NTPase family. Homodimer. It depends on Mg(2+) as a cofactor.

The catalysed reaction is XTP + H2O = XMP + diphosphate + H(+). It catalyses the reaction dITP + H2O = dIMP + diphosphate + H(+). It carries out the reaction ITP + H2O = IMP + diphosphate + H(+). In terms of biological role, pyrophosphatase that catalyzes the hydrolysis of nucleoside triphosphates to their monophosphate derivatives, with a high preference for the non-canonical purine nucleotides XTP (xanthosine triphosphate), dITP (deoxyinosine triphosphate) and ITP. Seems to function as a house-cleaning enzyme that removes non-canonical purine nucleotides from the nucleotide pool, thus preventing their incorporation into DNA/RNA and avoiding chromosomal lesions. The sequence is that of dITP/XTP pyrophosphatase from Mycobacterium leprae (strain TN).